The primary structure comprises 70 residues: Small ribosomal subunit protein bS18c (70 aa).

Belongs to the bacterial ribosomal protein bS18 family. Part of the 30S ribosomal subunit.

The protein resides in the plastid. The protein localises to the chloroplast. The sequence is that of Small ribosomal subunit protein bS18c from Pyropia yezoensis (Susabi-nori).